A 208-amino-acid chain; its full sequence is Small ribosomal subunit protein uS2 (208 aa).

The interval 189–208 (KPDQDLPVPPEEFETKLVQS) is disordered.

This sequence belongs to the universal ribosomal protein uS2 family.

This Pyrobaculum aerophilum (strain ATCC 51768 / DSM 7523 / JCM 9630 / CIP 104966 / NBRC 100827 / IM2) protein is Small ribosomal subunit protein uS2 (rps2).